The primary structure comprises 61 residues: Large ribosomal subunit protein eL29 (61 aa).

A compositionally biased stretch (basic residues) spans M1–K26. Residues M1–L32 are disordered.

Belongs to the eukaryotic ribosomal protein eL29 family. Component of the large ribosomal subunit (LSU). Mature yeast ribosomes consist of a small (40S) and a large (60S) subunit. The 40S small subunit contains 1 molecule of ribosomal RNA (18S rRNA) and at least 33 different proteins. The large 60S subunit contains 3 rRNA molecules (25S, 5.8S and 5S rRNA) and at least 46 different proteins.

Its subcellular location is the cytoplasm. It is found in the nucleus. The protein localises to the nucleolus. Component of the ribosome, a large ribonucleoprotein complex responsible for the synthesis of proteins in the cell. The small ribosomal subunit (SSU) binds messenger RNAs (mRNAs) and translates the encoded message by selecting cognate aminoacyl-transfer RNA (tRNA) molecules. The large subunit (LSU) contains the ribosomal catalytic site termed the peptidyl transferase center (PTC), which catalyzes the formation of peptide bonds, thereby polymerizing the amino acids delivered by tRNAs into a polypeptide chain. The nascent polypeptides leave the ribosome through a tunnel in the LSU and interact with protein factors that function in enzymatic processing, targeting, and the membrane insertion of nascent chains at the exit of the ribosomal tunnel. The polypeptide is Large ribosomal subunit protein eL29 (rpl29) (Schizosaccharomyces pombe (strain 972 / ATCC 24843) (Fission yeast)).